A 950-amino-acid polypeptide reads, in one-letter code: uncharacterized protein (950 aa).

This is an uncharacterized protein from Rickettsia prowazekii (strain Madrid E).